The sequence spans 90 residues: Cell division topological specificity factor (90 aa).

This sequence belongs to the MinE family.

Functionally, prevents the cell division inhibition by proteins MinC and MinD at internal division sites while permitting inhibition at polar sites. This ensures cell division at the proper site by restricting the formation of a division septum at the midpoint of the long axis of the cell. In Francisella philomiragia subsp. philomiragia (strain ATCC 25017 / CCUG 19701 / FSC 153 / O#319-036), this protein is Cell division topological specificity factor.